The sequence spans 84 residues: UPF0291 protein EUBELI_00985 (84 aa).

Belongs to the UPF0291 family.

It is found in the cytoplasm. The chain is UPF0291 protein EUBELI_00985 from Lachnospira eligens (strain ATCC 27750 / DSM 3376 / VPI C15-48 / C15-B4) (Eubacterium eligens).